The following is a 628-amino-acid chain: tRNA (guanine(37)-N(1))-methyltransferase (628 aa).

Residues H265, 303–304 (DL), 342–343 (DG), and N445 each bind S-adenosyl-L-methionine.

This sequence belongs to the class I-like SAM-binding methyltransferase superfamily. TRM5/TYW2 family. In terms of assembly, monomer.

The protein resides in the mitochondrion matrix. It is found in the nucleus. It localises to the cytoplasm. The catalysed reaction is guanosine(37) in tRNA + S-adenosyl-L-methionine = N(1)-methylguanosine(37) in tRNA + S-adenosyl-L-homocysteine + H(+). Specifically methylates the N1 position of guanosine-37 in various cytoplasmic and mitochondrial tRNAs. Methylation is not dependent on the nature of the nucleoside 5' of the target nucleoside. This is the first step in the biosynthesis of wybutosine (yW), a modified base adjacent to the anticodon of tRNAs and required for accurate decoding. In Mycosarcoma maydis (Corn smut fungus), this protein is tRNA (guanine(37)-N(1))-methyltransferase.